A 263-amino-acid chain; its full sequence is Glutamate racemase (263 aa).

Substrate contacts are provided by residues 13–14 (DS) and 45–46 (YG). The active-site Proton donor/acceptor is cysteine 77. Residue 78–79 (NT) participates in substrate binding. The active-site Proton donor/acceptor is the cysteine 185. 186–187 (TH) is a substrate binding site.

Belongs to the aspartate/glutamate racemases family.

It carries out the reaction L-glutamate = D-glutamate. Its pathway is cell wall biogenesis; peptidoglycan biosynthesis. Its function is as follows. Provides the (R)-glutamate required for cell wall biosynthesis. This chain is Glutamate racemase, found in Vibrio vulnificus (strain CMCP6).